Consider the following 259-residue polypeptide: Flagellar brake protein YcgR (259 aa).

The 118-residue stretch at 129 to 246 folds into the PilZ domain; the sequence is QRREFYRLQT…DNAIQRYIFK (118 aa).

The protein belongs to the YcgR family. In terms of assembly, monomer. Interacts with the flagellar basal bodies.

The protein localises to the bacterial flagellum basal body. In terms of biological role, acts as a flagellar brake, regulating swimming and swarming in a bis-(3'-5') cyclic diguanylic acid (c-di-GMP)-dependent manner. Binds 1 c-di-GMP dimer per subunit. Increasing levels of c-di-GMP lead to decreased motility. The chain is Flagellar brake protein YcgR from Azoarcus sp. (strain BH72).